We begin with the raw amino-acid sequence, 83 residues long: Small ribosomal subunit protein uS17 (83 aa).

It belongs to the universal ribosomal protein uS17 family. In terms of assembly, part of the 30S ribosomal subunit.

Functionally, one of the primary rRNA binding proteins, it binds specifically to the 5'-end of 16S ribosomal RNA. This is Small ribosomal subunit protein uS17 from Campylobacter jejuni subsp. jejuni serotype O:6 (strain 81116 / NCTC 11828).